The following is a 601-amino-acid chain: Protein CT_858 (601 aa).

The protein belongs to the chlamydial CPn_1016/CT_858/TC_0248 family.

The polypeptide is Protein CT_858 (Chlamydia trachomatis serovar D (strain ATCC VR-885 / DSM 19411 / UW-3/Cx)).